The following is a 481-amino-acid chain: ATP synthase subunit beta (481 aa).

G160–T167 is a binding site for ATP.

Belongs to the ATPase alpha/beta chains family. F-type ATPases have 2 components, CF(1) - the catalytic core - and CF(0) - the membrane proton channel. CF(1) has five subunits: alpha(3), beta(3), gamma(1), delta(1), epsilon(1). CF(0) has three main subunits: a(1), b(2) and c(9-12). The alpha and beta chains form an alternating ring which encloses part of the gamma chain. CF(1) is attached to CF(0) by a central stalk formed by the gamma and epsilon chains, while a peripheral stalk is formed by the delta and b chains.

It is found in the cell inner membrane. It carries out the reaction ATP + H2O + 4 H(+)(in) = ADP + phosphate + 5 H(+)(out). Its function is as follows. Produces ATP from ADP in the presence of a proton gradient across the membrane. The catalytic sites are hosted primarily by the beta subunits. The polypeptide is ATP synthase subunit beta (Stigmatella aurantiaca).